A 171-amino-acid chain; its full sequence is Sec-independent protein translocase protein TatB (171 aa).

The helical transmembrane segment at 1 to 21 (MFDIGFSELLLVFIIGLVVLG) threads the bilayer. The tract at residues 117-171 (KDNETAHEGVTPAAAQTQASSPEQKPETTPEPVVKPAADAEPKTAAPSPSSSDKP) is disordered. The span at 130-139 (AAQTQASSPE) shows a compositional bias: polar residues.

Belongs to the TatB family. As to quaternary structure, the Tat system comprises two distinct complexes: a TatABC complex, containing multiple copies of TatA, TatB and TatC subunits, and a separate TatA complex, containing only TatA subunits. Substrates initially bind to the TatABC complex, which probably triggers association of the separate TatA complex to form the active translocon.

It is found in the cell inner membrane. Part of the twin-arginine translocation (Tat) system that transports large folded proteins containing a characteristic twin-arginine motif in their signal peptide across membranes. Together with TatC, TatB is part of a receptor directly interacting with Tat signal peptides. TatB may form an oligomeric binding site that transiently accommodates folded Tat precursor proteins before their translocation. The protein is Sec-independent protein translocase protein TatB of Escherichia coli O6:K15:H31 (strain 536 / UPEC).